Here is a 405-residue protein sequence, read N- to C-terminus: Scramblase ANY1 (405 aa).

Over 1–51 (MSTTGPLDATLIRDVAVATATKASYDMSDTLYSYLPKVDQFYIPEWLTMQF) the chain is Cytoplasmic. Residues 52–72 (IANNLISFTPLFSYGTTIISI) form a helical membrane-spanning segment. At 73–76 (EKCK) the chain is on the lumenal side. A helical membrane pass occupies residues 77-97 (TALGFSIDICATMLIASILRI). Over 98–103 (SYYLIT) the chain is Cytoplasmic. The helical transmembrane segment at 104–124 (PYEITLLRQSLVMIFIQLILL) threads the bilayer. Residues 125–177 (RTSLKYRPDEYKYQNLTDVESLSHLIHDIWFEFFSCINRPKFLSEDWKNLIKS) lie on the Lumenal side of the membrane. A helical membrane pass occupies residues 178–198 (LSFTNLLKFSFKIFLAFFYKI). Over 199 to 223 (LKFFDPNFKRIGAFWQWDDDKNFWR) the chain is Cytoplasmic. A helical membrane pass occupies residues 224–244 (FLALFATVQILVTFFISNILN). At 245 to 254 (WDSLAQGLGS) the chain is on the lumenal side. The 58-residue stretch at 252–309 (LGSIIGSLGLLVESLLPLPQIAILYKLKSVQGFKLILLVSWLCGDTLKITYLIFGAKN) folds into the PQ-loop domain. A helical transmembrane segment spans residues 255–275 (IIGSLGLLVESLLPLPQIAIL). Residues 276–283 (YKLKSVQG) lie on the Cytoplasmic side of the membrane. A helical membrane pass occupies residues 284–306 (FKLILLVSWLCGDTLKITYLIFG). Residues 307 to 312 (AKNISA) lie on the Lumenal side of the membrane. The chain crosses the membrane as a helical span at residues 313 to 335 (LFVIFALFQMSLDFYIGGQYIYY). Over 336-405 (RYYYPKLRHQ…GKSQAQAVTL (70 aa)) the chain is Cytoplasmic. A disordered region spans residues 379–405 (LKQDSNDTSDSPQDDQVGKSQAQAVTL). A compositionally biased stretch (polar residues) spans 396–405 (GKSQAQAVTL).

Interacts with NEO1.

The protein localises to the golgi apparatus membrane. It is found in the late endosome membrane. In terms of biological role, phospholipid scramblase that transports phosphatidylserine (PS) and phosphatidylethalonamine (PE) bidirectionally from one leaflet to the other of the phospholipid bilayer to at least partially collapse the membrane asymmetry established by NEO1 and other flippases. The PS scramblase activity has been disputed. Functions in the trafficking pathway from endosomes to the trans-Golgi network (TGN). The sequence is that of Scramblase ANY1 from Saccharomyces cerevisiae (strain ATCC 204508 / S288c) (Baker's yeast).